The primary structure comprises 509 residues: Protein root UVB sensitive 5 (509 aa).

A disordered region spans residues 22–49 (CQPKRRRVEHLRCSAQPSSIREDDEDAD).

It belongs to the RUS1 family.

This Arabidopsis thaliana (Mouse-ear cress) protein is Protein root UVB sensitive 5.